Consider the following 569-residue polypeptide: Laccase-13 (569 aa).

The signal sequence occupies residues 1 to 21 (MEQLRPFFLLLAIFVASLVNA). Plastocyanin-like domains lie at 29-145 (VIQE…PPLS) and 157-308 (REIT…YKDA). Asn-75 carries N-linked (GlcNAc...) asparagine glycosylation. Cu cation-binding residues include His-79, His-81, His-124, and His-126. Asn-186, Asn-296, Asn-330, Asn-381, Asn-391, and Asn-432 each carry an N-linked (GlcNAc...) asparagine glycan. A Plastocyanin-like 3 domain is found at 418-553 (DFPPTPPVTF…AMVFLVENGE (136 aa)). The Cu cation site is built by His-470, His-473, His-475, His-532, Cys-533, His-534, and His-538.

This sequence belongs to the multicopper oxidase family. Cu cation serves as cofactor. In terms of tissue distribution, mostly expressed in roots. Also detected in leaves, stems and flowers but not in siliques.

It localises to the secreted. It is found in the extracellular space. Its subcellular location is the apoplast. The catalysed reaction is 4 hydroquinone + O2 = 4 benzosemiquinone + 2 H2O. Lignin degradation and detoxification of lignin-derived products. In Arabidopsis thaliana (Mouse-ear cress), this protein is Laccase-13 (LAC13).